The chain runs to 507 residues: Wax ester synthase/diacylglycerol acyltransferase 5 (507 aa).

Residues 1–211 (MEIKIRRRRG…LKTSSRCYSR (211 aa)) lie on the Cytoplasmic side of the membrane. His-161 (proton acceptor) is an active-site residue. A helical membrane pass occupies residues 212–232 (FFWLVMVLWSAALLVLNTVCD). At 233–507 (ALEFIATALF…VVVQERTSTQ (275 aa)) the chain is on the lumenal side. Residues Asn-314 and Asn-421 are each glycosylated (N-linked (GlcNAc...) asparagine).

It in the N-terminal section; belongs to the long-chain O-acyltransferase family. As to expression, mostly expressed in flowers and siliques.

It is found in the cell membrane. It localises to the endoplasmic reticulum membrane. It carries out the reaction a long chain fatty alcohol + a fatty acyl-CoA = a wax ester + CoA. It catalyses the reaction an acyl-CoA + a 1,2-diacyl-sn-glycerol = a triacyl-sn-glycerol + CoA. Its pathway is glycerolipid metabolism; triacylglycerol biosynthesis. It participates in lipid metabolism. Its function is as follows. Bifunctional wax ester synthase/diacylglycerol acyltransferase. Involved in cuticular wax biosynthesis. The protein is Wax ester synthase/diacylglycerol acyltransferase 5 of Arabidopsis thaliana (Mouse-ear cress).